The following is a 198-amino-acid chain: Recombination protein RecR (198 aa).

The segment at 56 to 71 (CTECRDFSETKICAIC) adopts a C4-type zinc-finger fold. The Toprim domain maps to 79–174 (HQLCVVESPP…RPSRLAQGLP (96 aa)).

It belongs to the RecR family.

Its function is as follows. May play a role in DNA repair. It seems to be involved in an RecBC-independent recombinational process of DNA repair. It may act with RecF and RecO. This Xylella fastidiosa (strain 9a5c) protein is Recombination protein RecR.